A 227-amino-acid chain; its full sequence is UPF0173 metal-dependent hydrolase Tlet_1100 (227 aa).

The protein belongs to the UPF0173 family.

The polypeptide is UPF0173 metal-dependent hydrolase Tlet_1100 (Pseudothermotoga lettingae (strain ATCC BAA-301 / DSM 14385 / NBRC 107922 / TMO) (Thermotoga lettingae)).